A 232-amino-acid chain; its full sequence is Ribonuclease 3 (232 aa).

The RNase III domain occupies 6–133 (FNDIENRLGV…VIAAVYLDKG (128 aa)). E46 lines the Mg(2+) pocket. Residue D50 is part of the active site. Mg(2+)-binding residues include D119 and E122. Residue E122 is part of the active site. Residues 160 to 229 (DFKTKLQELL…AKEALKRLEK (70 aa)) form the DRBM domain.

It belongs to the ribonuclease III family. Homodimer. The cofactor is Mg(2+).

The protein resides in the cytoplasm. It catalyses the reaction Endonucleolytic cleavage to 5'-phosphomonoester.. Digests double-stranded RNA. Involved in the processing of primary rRNA transcript to yield the immediate precursors to the large and small rRNAs (23S and 16S). Processes some mRNAs, and tRNAs when they are encoded in the rRNA operon. Processes pre-crRNA and tracrRNA of type II CRISPR loci if present in the organism. This Clostridium botulinum (strain Alaska E43 / Type E3) protein is Ribonuclease 3.